Here is a 59-residue protein sequence, read N- to C-terminus: Large ribosomal subunit protein bL32 (59 aa).

Belongs to the bacterial ribosomal protein bL32 family.

The sequence is that of Large ribosomal subunit protein bL32 from Limosilactobacillus reuteri (strain DSM 20016) (Lactobacillus reuteri).